Reading from the N-terminus, the 294-residue chain is Tyrosine-protein phosphatase (294 aa).

An N-terminal signal peptide occupies residues 1–24 (MKTHHANLALALMLGLSSSATAVA). Cys182 functions as the Phosphocysteine intermediate in the catalytic mechanism. 2 stretches are compositionally biased toward basic and acidic residues: residues 221-231 (QPKDSDERADH) and 238-247 (PGDRPQDGGH). A disordered region spans residues 221–252 (QPKDSDERADHGAGQAEPGDRPQDGGHGRYRA).

This sequence belongs to the protein-tyrosine phosphatase family. As to quaternary structure, monomer.

It carries out the reaction O-phospho-L-tyrosyl-[protein] + H2O = L-tyrosyl-[protein] + phosphate. The protein is Tyrosine-protein phosphatase (iphP) of Nostoc commune.